The chain runs to 164 residues: Endoribonuclease YbeY (164 aa).

Zn(2+) contacts are provided by His124, His128, and His134.

The protein belongs to the endoribonuclease YbeY family. Requires Zn(2+) as cofactor.

The protein localises to the cytoplasm. In terms of biological role, single strand-specific metallo-endoribonuclease involved in late-stage 70S ribosome quality control and in maturation of the 3' terminus of the 16S rRNA. This Nitrosomonas europaea (strain ATCC 19718 / CIP 103999 / KCTC 2705 / NBRC 14298) protein is Endoribonuclease YbeY.